A 289-amino-acid chain; its full sequence is ATP synthase gamma chain (289 aa).

This sequence belongs to the ATPase gamma chain family. In terms of assembly, F-type ATPases have 2 components, CF(1) - the catalytic core - and CF(0) - the membrane proton channel. CF(1) has five subunits: alpha(3), beta(3), gamma(1), delta(1), epsilon(1). CF(0) has three main subunits: a, b and c.

It is found in the cell inner membrane. Functionally, produces ATP from ADP in the presence of a proton gradient across the membrane. The gamma chain is believed to be important in regulating ATPase activity and the flow of protons through the CF(0) complex. The polypeptide is ATP synthase gamma chain (Coxiella burnetii (strain Dugway 5J108-111)).